A 334-amino-acid chain; its full sequence is Nucleoid-associated protein ESA_01050 (334 aa).

This sequence belongs to the YejK family.

The protein resides in the cytoplasm. The protein localises to the nucleoid. The polypeptide is Nucleoid-associated protein ESA_01050 (Cronobacter sakazakii (strain ATCC BAA-894) (Enterobacter sakazakii)).